Reading from the N-terminus, the 106-residue chain is Iron-sulfur cluster assembly protein CyaY (106 aa).

The protein belongs to the frataxin family.

Functionally, involved in iron-sulfur (Fe-S) cluster assembly. May act as a regulator of Fe-S biogenesis. The sequence is that of Iron-sulfur cluster assembly protein CyaY from Photorhabdus laumondii subsp. laumondii (strain DSM 15139 / CIP 105565 / TT01) (Photorhabdus luminescens subsp. laumondii).